Here is a 196-residue protein sequence, read N- to C-terminus: MCSRVRWTLRWESELQLDDHVELASFFRKTYGPTGAFNAKPFEGSRSWAGARPELRAIAYDSNGVAAHMGLLRRFIKVGEVDLLVAELGLYGVRPDLEGLGISHSLRVMYPVLQQLRVPFGFGAVRHALQKHVERFGRHVPANVLSGIRVRSTLPDARLDLPPTRIEDVLVVVFPVELAMSDWPTATFIDRNGPEL.

The protein belongs to the NodA family.

The protein localises to the cytoplasm. Its function is as follows. N-acyltransferase required for nodulation. Acts in the production of a small, heat-stable compound (Nod) that stimulates mitosis in various plant protoplasts. This Sinorhizobium terangae protein is Nodulation protein A.